The sequence spans 158 residues: FUN14 domain-containing protein 1 (158 aa).

The short motif at 21 to 24 (YEVV) is the YXXL element. The next 2 membrane-spanning stretches (helical) occupy residues 51–70 (YSVT…AGYL) and 77–98 (IAAT…SGYV).

Belongs to the FUN14 family.

The protein resides in the mitochondrion outer membrane. Its function is as follows. Acts as an activator of hypoxia-induced mitophagy, an important mechanism for mitochondrial quality control. The polypeptide is FUN14 domain-containing protein 1 (fundc1) (Tetraodon nigroviridis (Spotted green pufferfish)).